We begin with the raw amino-acid sequence, 1020 residues long: 5'-3' exoribonuclease 3 (1020 aa).

The segment at 113-144 (QQRSRRFRSAKDASDAAAEEERLREEFEREGR) is disordered. Basic and acidic residues predominate over residues 121–144 (SAKDASDAAAEEERLREEFEREGR). The CCHC-type zinc-finger motif lies at 262–279 (ERCFLCGQMGHFASNCEG). Disordered stretches follow at residues 411-440 (QHQRQAERVKRDKAGKATKRMDDEAPTVQP) and 452-483 (RLASAPTPSPFQSNDGRSAPHQKVRRLSPGSS). A compositionally biased stretch (basic and acidic residues) spans 414–433 (RQAERVKRDKAGKATKRMDD). Residues 487–523 (AIVDVENSLESDERENKEELKTKLKELIREKSDAFNS) are a coiled coil. A compositionally biased stretch (low complexity) spans 831–844 (NNHGMHNNHGMHNN). Disordered regions lie at residues 831-859 (NNHGMHNNHGMHNNQGRQNPPGSVSGRHL), 875-897 (TDRYQTPTDVPAPGYGYNPPQYV), and 911-1020 (PGAQ…RHRY). Low complexity-rich tracts occupy residues 911–923 (PGAQGYAQPAPYQ) and 960–972 (GNHQNQHQQQQWH). Residues 1000-1020 (RGRGRGSHHHHDQGGNPRHRY) show a composition bias toward basic residues.

The protein belongs to the 5'-3' exonuclease family. XRN2/RAT1 subfamily. As to expression, expressed in roots, leaves, stems and flowers.

The protein resides in the nucleus. Its function is as follows. Possesses 5'-&gt;3' exoribonuclease activity. Acts as an endogenous post-transcriptional gene silencing (PTGS) suppressor. Degrades miRNA-derived loops, excised during miRNA maturation in the nucleus. Required for proper development. Involved in pre-rRNA processing. Involved with XRN2 in the 5'-end exonucleolytic processing of 5.8S and 25S rRNAs. Contributes with XRN2 to polyadenylation-dependent nuclear RNA surveillance. Involved in the degradation of aberrant polyadenylated pre-rRNA through 5'-end processing. The polypeptide is 5'-3' exoribonuclease 3 (Arabidopsis thaliana (Mouse-ear cress)).